A 470-amino-acid polypeptide reads, in one-letter code: Maturase K (470 aa).

This sequence belongs to the intron maturase 2 family. MatK subfamily.

It is found in the plastid. The protein resides in the chloroplast. Functionally, usually encoded in the trnK tRNA gene intron. Probably assists in splicing its own and other chloroplast group II introns. The protein is Maturase K of Nypa fruticans (Nypa palm).